A 173-amino-acid chain; its full sequence is Catabolic 3-dehydroquinase (173 aa).

The active-site Proton acceptor is the tyrosine 26. Substrate is bound by residues asparagine 102, histidine 108, and aspartate 115. Histidine 128 functions as the Proton donor in the catalytic mechanism. Substrate-binding positions include 129–130 (VS) and arginine 139.

Belongs to the type-II 3-dehydroquinase family. Homododecamer. Adopts a ring-like structure, composed of an arrangement of two hexameric rings stacked on top of one another.

It catalyses the reaction 3-dehydroquinate = 3-dehydroshikimate + H2O. The protein operates within aromatic compound metabolism; 3,4-dihydroxybenzoate biosynthesis; 3,4-dihydroxybenzoate from 3-dehydroquinate: step 1/2. 3-dehydroquinate dehydratase; part of the qa gene cluster that mediates the catabolism of quinic acid (QA) and as such, allows the use of QA as a sole carbon source. Catalyzes the second reaction in the inducible quinic acid catabolic pathway by converting 3-dehydroquinate into 3-dehydroshikimate. The qa cluster encodes 3 inducible enymes (qa-2, qa-3 and qa-4) catalyzing the first three reactions in the catabolism of quinic acid to protocatechuic acid (also known as 3,4-Dihydroxybenzoic acid). The protein is Catabolic 3-dehydroquinase of Neurospora crassa (strain ATCC 24698 / 74-OR23-1A / CBS 708.71 / DSM 1257 / FGSC 987).